A 449-amino-acid polypeptide reads, in one-letter code: Hyaluronidase-4 (449 aa).

A signal peptide spans 1–23; that stretch reads MYHIWIKFLAAWIFLKRFNGVHV. Cystine bridges form between C47–C340 and C211–C227. N-linked (GlcNAc...) asparagine glycans are attached at residues N67, N103, and N111. The active-site Proton donor is E135. N153 carries an N-linked (GlcNAc...) asparagine glycan. N-linked (GlcNAc...) asparagine glycosylation is present at N357. Cystine bridges form between C365–C376, C370–C427, and C429–C438. N401 carries an N-linked (GlcNAc...) asparagine glycan. Positions 427 to 438 constitute an EGF-like domain; sequence CQCYQGWKGLYC.

It belongs to the glycosyl hydrolase 56 family. Monomer. As to expression, expressed by the venom gland.

The protein resides in the secreted. The catalysed reaction is Random hydrolysis of (1-&gt;4)-linkages between N-acetyl-beta-D-glucosamine and D-glucuronate residues in hyaluronate.. Its function is as follows. Snake venom endo-hyaluronidase that degrades hyaluronan to smaller oligosaccharide fragments. In venom, it is not toxic by itself, but increases the diffusion of other venom proteins by degrading the extracellular matrix. In addition, it displays antiedematogenic activity. In Cerastes cerastes (Horned desert viper), this protein is Hyaluronidase-4.